The primary structure comprises 209 residues: Large ribosomal subunit protein uL4 (209 aa).

Residues 46–76 (RGTASTKTRGEVSGGGRKPWRQKGTGRARHG) are disordered. Positions 63-76 (KPWRQKGTGRARHG) are enriched in basic residues.

Belongs to the universal ribosomal protein uL4 family. As to quaternary structure, part of the 50S ribosomal subunit.

In terms of biological role, one of the primary rRNA binding proteins, this protein initially binds near the 5'-end of the 23S rRNA. It is important during the early stages of 50S assembly. It makes multiple contacts with different domains of the 23S rRNA in the assembled 50S subunit and ribosome. Forms part of the polypeptide exit tunnel. The sequence is that of Large ribosomal subunit protein uL4 from Halothermothrix orenii (strain H 168 / OCM 544 / DSM 9562).